The following is a 313-amino-acid chain: Glutathione synthetase (313 aa).

The 185-residue stretch at 125–309 (KLFVMDFTEL…IAAKIWDVIE (185 aa)) folds into the ATP-grasp domain. 151-207 (RAEHGAVVMKPLHGHGGAAVFRVLPQDINFGSLYDMFAVTFREPWVIQRFLPEVKHG) lines the ATP pocket. Positions 280 and 282 each coordinate Mg(2+).

Belongs to the prokaryotic GSH synthase family. Mg(2+) is required as a cofactor. The cofactor is Mn(2+).

The enzyme catalyses gamma-L-glutamyl-L-cysteine + glycine + ATP = glutathione + ADP + phosphate + H(+). Its pathway is sulfur metabolism; glutathione biosynthesis; glutathione from L-cysteine and L-glutamate: step 2/2. The chain is Glutathione synthetase from Rhodopseudomonas palustris (strain ATCC BAA-98 / CGA009).